The primary structure comprises 361 residues: MKDSIKAKLQSLIERHEEVSALLGEANVISDQNKFRDLSKEYSHLEPIVMAFKEYTQALEDKEAAYEMLNEKDAELVEMAKEELKSANESIERLEDELQILLLPRDPNDDANIFLEIRAGTGGDEASIFSGDLFKMYSKYAEQRGWKIEVVSASEGEHGGYKEIISRIYGDGVYSQLKFESGAHRVQRVPATESQGRIHTSACTVAVMPEADEVEGIDINPADIKVDTFRASGAGGQHVNKTDSAIRITHIPTGVVVECQDQRSQHKNRAAAMSMLKSKLLQAEIDKQQKEQSDTRKNLVGSGDRSERIRTYNYPQGRVTDHRINLTLYKLDEVMEGSLDSIIQPLILEHQADLLATMSDE.

Gln237 is modified (N5-methylglutamine). Basic and acidic residues predominate over residues 287–297; it reads KQQKEQSDTRK. Residues 287–307 form a disordered region; it reads KQQKEQSDTRKNLVGSGDRSE.

The protein belongs to the prokaryotic/mitochondrial release factor family. In terms of processing, methylated by PrmC. Methylation increases the termination efficiency of RF1.

It localises to the cytoplasm. In terms of biological role, peptide chain release factor 1 directs the termination of translation in response to the peptide chain termination codons UAG and UAA. In Francisella philomiragia subsp. philomiragia (strain ATCC 25017 / CCUG 19701 / FSC 153 / O#319-036), this protein is Peptide chain release factor 1.